The following is a 229-amino-acid chain: Large ribosomal subunit protein uL1 (229 aa).

As to quaternary structure, part of the 50S ribosomal subunit.

Its function is as follows. Directly binds to 23S rRNA. Forms what is known as the L1 stalk, which protrudes beyond the 70S ribosome surface. The stalk is preferentially stabilized in 70S versus 50S crystals. Interacts with the E site tRNA, blocking the exit path. This blockage implies that this section of the ribosome must be able to move to release the deacetylated tRNA. Protein L1 is also a translational repressor protein, it controls the translation of the L11 operon by binding to its mRNA. This is Large ribosomal subunit protein uL1 (rplA) from Thermus thermophilus (strain ATCC 27634 / DSM 579 / HB8).